A 293-amino-acid polypeptide reads, in one-letter code: Elongation factor Ts (293 aa).

The interval 80–83 (TDFV) is involved in Mg(2+) ion dislocation from EF-Tu.

Belongs to the EF-Ts family.

Its subcellular location is the cytoplasm. Associates with the EF-Tu.GDP complex and induces the exchange of GDP to GTP. It remains bound to the aminoacyl-tRNA.EF-Tu.GTP complex up to the GTP hydrolysis stage on the ribosome. This is Elongation factor Ts from Burkholderia lata (strain ATCC 17760 / DSM 23089 / LMG 22485 / NCIMB 9086 / R18194 / 383).